A 646-amino-acid chain; its full sequence is Threonine--tRNA ligase (646 aa).

A TGS domain is found at 1-61; that stretch reads MIKITFPDGS…NEDASVVLYK (61 aa). The tract at residues 242–541 is catalytic; that stretch reads DHRKIGKEMQ…LIEHTAGKFP (300 aa). Zn(2+) contacts are provided by Cys-337, His-388, and His-518.

Belongs to the class-II aminoacyl-tRNA synthetase family. As to quaternary structure, homodimer. Zn(2+) serves as cofactor.

It localises to the cytoplasm. It catalyses the reaction tRNA(Thr) + L-threonine + ATP = L-threonyl-tRNA(Thr) + AMP + diphosphate + H(+). Catalyzes the attachment of threonine to tRNA(Thr) in a two-step reaction: L-threonine is first activated by ATP to form Thr-AMP and then transferred to the acceptor end of tRNA(Thr). Also edits incorrectly charged L-seryl-tRNA(Thr). The sequence is that of Threonine--tRNA ligase from Bacteroides fragilis (strain YCH46).